The chain runs to 148 residues: Ubiquitin-conjugating enzyme E2 10 (148 aa).

The UBC core domain maps to 1–147 (MASKRILKEL…ARSWTQKYAM (147 aa)). Cysteine 85 acts as the Glycyl thioester intermediate in catalysis.

Belongs to the ubiquitin-conjugating enzyme family. As to quaternary structure, interacts with CHIP and the E3 ubiquitin ligase BB. Associates with the E3 ubiquitin ligase JMJ24. As to expression, ubiquitously expressed with the highest levels in rosette leaves, roots and petals.

It carries out the reaction S-ubiquitinyl-[E1 ubiquitin-activating enzyme]-L-cysteine + [E2 ubiquitin-conjugating enzyme]-L-cysteine = [E1 ubiquitin-activating enzyme]-L-cysteine + S-ubiquitinyl-[E2 ubiquitin-conjugating enzyme]-L-cysteine.. The protein operates within protein modification; protein ubiquitination. Functionally, accepts the ubiquitin from the E1 complex and catalyzes its covalent attachment to other proteins. Mediates the selective degradation of short-lived and abnormal proteins. This is Ubiquitin-conjugating enzyme E2 10 from Arabidopsis thaliana (Mouse-ear cress).